Reading from the N-terminus, the 150-residue chain is Putative solute carrier family 19 member 4 (150 aa).

The interval 118 to 137 (PSVREGACNEKSTENKKPQD) is disordered. The segment covering 124–136 (ACNEKSTENKKPQ) has biased composition (basic and acidic residues).

This sequence belongs to the reduced folate carrier (RFC) transporter (TC 2.A.48) family.

The sequence is that of Putative solute carrier family 19 member 4 from Homo sapiens (Human).